The primary structure comprises 201 residues: Peptidyl-tRNA hydrolase (201 aa).

A tRNA-binding site is contributed by Tyr15. Catalysis depends on His20, which acts as the Proton acceptor. Residues Tyr66, Asn68, and Asn114 each contribute to the tRNA site.

This sequence belongs to the PTH family. Monomer.

It localises to the cytoplasm. The enzyme catalyses an N-acyl-L-alpha-aminoacyl-tRNA + H2O = an N-acyl-L-amino acid + a tRNA + H(+). Functionally, hydrolyzes ribosome-free peptidyl-tRNAs (with 1 or more amino acids incorporated), which drop off the ribosome during protein synthesis, or as a result of ribosome stalling. Catalyzes the release of premature peptidyl moieties from peptidyl-tRNA molecules trapped in stalled 50S ribosomal subunits, and thus maintains levels of free tRNAs and 50S ribosomes. The sequence is that of Peptidyl-tRNA hydrolase from Burkholderia mallei (strain NCTC 10247).